The following is a 293-amino-acid chain: Formamidopyrimidine-DNA glycosylase (293 aa).

Catalysis depends on proline 2, which acts as the Schiff-base intermediate with DNA. Glutamate 3 acts as the Proton donor in catalysis. The active-site Proton donor; for beta-elimination activity is the lysine 60. DNA contacts are provided by histidine 110, arginine 129, and lysine 174. The FPG-type zinc finger occupies 259–293; it reads NVYRRTGKKCHACKNLIERQKISGRSTHWCRKCQK. The active-site Proton donor; for delta-elimination activity is the arginine 283.

Belongs to the FPG family. In terms of assembly, monomer. The cofactor is Zn(2+).

The enzyme catalyses Hydrolysis of DNA containing ring-opened 7-methylguanine residues, releasing 2,6-diamino-4-hydroxy-5-(N-methyl)formamidopyrimidine.. It catalyses the reaction 2'-deoxyribonucleotide-(2'-deoxyribose 5'-phosphate)-2'-deoxyribonucleotide-DNA = a 3'-end 2'-deoxyribonucleotide-(2,3-dehydro-2,3-deoxyribose 5'-phosphate)-DNA + a 5'-end 5'-phospho-2'-deoxyribonucleoside-DNA + H(+). Functionally, involved in base excision repair of DNA damaged by oxidation or by mutagenic agents. Acts as a DNA glycosylase that recognizes and removes damaged bases. Has a preference for oxidized purines, such as 7,8-dihydro-8-oxoguanine (8-oxoG). Has AP (apurinic/apyrimidinic) lyase activity and introduces nicks in the DNA strand. Cleaves the DNA backbone by beta-delta elimination to generate a single-strand break at the site of the removed base with both 3'- and 5'-phosphates. In Prochlorococcus marinus (strain MIT 9515), this protein is Formamidopyrimidine-DNA glycosylase.